The following is a 451-amino-acid chain: Metalloprotease MJ0996 (451 aa).

This sequence belongs to the peptidase U62 family.

Probable metalloprotease. This is Metalloprotease MJ0996 from Methanocaldococcus jannaschii (strain ATCC 43067 / DSM 2661 / JAL-1 / JCM 10045 / NBRC 100440) (Methanococcus jannaschii).